The sequence spans 256 residues: V-type proton ATPase subunit D (256 aa).

Positions 211–230 (QNETAKLDAEMKLKRDRAEQ) are enriched in basic and acidic residues. The segment at 211–256 (QNETAKLDAEMKLKRDRAEQDASEVAADEEPQGETLVADQEDDVIF) is disordered.

The protein belongs to the V-ATPase D subunit family. In terms of assembly, V-ATPase is a heteromultimeric enzyme composed of a peripheral catalytic V1 complex (components A to H) attached to an integral membrane V0 proton pore complex (components: a, c, c', c'', d, e, f and VOA1). Interacts with RAV1 and RAV2 components of the RAVE complex, which are essential for the stability and assembly of V-ATPase.

Its subcellular location is the vacuole membrane. Functionally, subunit of the V1 complex of vacuolar(H+)-ATPase (V-ATPase), a multisubunit enzyme composed of a peripheral complex (V1) that hydrolyzes ATP and a membrane integral complex (V0) that translocates protons. V-ATPase is responsible for acidifying and maintaining the pH of intracellular compartments. The protein is V-type proton ATPase subunit D of Saccharomyces cerevisiae (strain ATCC 204508 / S288c) (Baker's yeast).